The primary structure comprises 336 residues: Aspartate--ammonia ligase (336 aa).

The protein belongs to the class-II aminoacyl-tRNA synthetase family. AsnA subfamily.

It localises to the cytoplasm. The enzyme catalyses L-aspartate + NH4(+) + ATP = L-asparagine + AMP + diphosphate + H(+). The protein operates within amino-acid biosynthesis; L-asparagine biosynthesis; L-asparagine from L-aspartate (ammonia route): step 1/1. The sequence is that of Aspartate--ammonia ligase from Clostridium perfringens (strain 13 / Type A).